Consider the following 557-residue polypeptide: MPGKFQTGLRVLATCLFALLVLGGILVAYVTGYQFIHTDRHHLSFGLYGAILGLHLLSQSLFAFLEHRKMRGGGRCPSGKSTVVLCIAAYQEDPEYLRKCLRSVRRLSYPHLRVIMVVDGNTEEDRYMMDIFREVMGSEGTCCYIWDKNYHESEEGGQEGERGVQEMVKNFQYVCIMQKWGGKREVTYTAFRALGDSVAYVQVCDSDTVLDPACTAEMLRILEEDPEVGGVGGDVQILNKYESWISFLSSFRYWMAFNVERACQSYFGCVQCISGPLGMYRNSLLQYFLEDWYHQTFLGQKCSFGDDRHLTNRVLSMGFRTKYTARSRCLTETPTRYLRWLNQQTRWSKSYFREWLYNALWFHKHHLWMTYESVVTGFFPFFLVATVVQLFYRGRVWNILLFLLTVQLVGILKATYACILRGNAEMIFMSLYSLLYMTSLLPAKIFAVITIKKSGWGTSGRRKLVVNFMGMVPVSVWFCILLGGLVYTAYCQSHDPFTETELLFLLTGAILYGCYWVALLSLYLALIARRCGKRQELYNLALEEVSEPEPAAKAIKP.

The Cytoplasmic portion of the chain corresponds to 1-10; the sequence is MPGKFQTGLR. A helical transmembrane segment spans residues 11 to 31; that stretch reads VLATCLFALLVLGGILVAYVT. Residues 32–44 lie on the Extracellular side of the membrane; that stretch reads GYQFIHTDRHHLS. A helical transmembrane segment spans residues 45–65; that stretch reads FGLYGAILGLHLLSQSLFAFL. The Cytoplasmic portion of the chain corresponds to 66 to 367; that stretch reads EHRKMRGGGR…NALWFHKHHL (302 aa). A helical membrane pass occupies residues 368-388; that stretch reads WMTYESVVTGFFPFFLVATVV. Topologically, residues 389-398 are extracellular; the sequence is QLFYRGRVWN. The helical transmembrane segment at 399–419 threads the bilayer; sequence ILLFLLTVQLVGILKATYACI. Residues 420-430 are Cytoplasmic-facing; that stretch reads LRGNAEMIFMS. The chain crosses the membrane as a helical span at residues 431–451; it reads LYSLLYMTSLLPAKIFAVITI. Residues 452–463 lie on the Extracellular side of the membrane; sequence KKSGWGTSGRRK. Residues 464–484 traverse the membrane as a helical segment; the sequence is LVVNFMGMVPVSVWFCILLGG. Residues 485–501 lie on the Cytoplasmic side of the membrane; it reads LVYTAYCQSHDPFTETE. A helical membrane pass occupies residues 502 to 522; sequence LLFLLTGAILYGCYWVALLSL. Residues 523 to 557 are Extracellular-facing; the sequence is YLALIARRCGKRQELYNLALEEVSEPEPAAKAIKP.

The protein belongs to the NodC/HAS family. It depends on Mg(2+) as a cofactor. Post-translationally, O-GlcNAcylation increases the hyaluronan synthase activity, HAS3 stability and its plasma membrane residence. The concentration of UDP-GlcNAc controls the level of O-GlcNAc modification.

It localises to the cell membrane. The protein localises to the golgi apparatus membrane. The protein resides in the golgi apparatus. Its subcellular location is the trans-Golgi network membrane. It is found in the cytoplasmic vesicle. The enzyme catalyses [hyaluronan](n) + UDP-N-acetyl-alpha-D-glucosamine = N-acetyl-beta-D-glucosaminyl-(1-&gt;4)-[hyaluronan](n) + UDP + H(+). It catalyses the reaction N-acetyl-beta-D-glucosaminyl-(1-&gt;4)-[hyaluronan](n) + UDP-alpha-D-glucuronate = [hyaluronan](n+1) + UDP + H(+). Its pathway is glycan biosynthesis; hyaluronan biosynthesis. Functionally, catalyzes the addition of GlcNAc or GlcUA monosaccharides to the nascent hyaluronan polymer. Therefore, it is essential to hyaluronan synthesis a major component of most extracellular matrices that has a structural role in tissues architectures and regulates cell adhesion, migration and differentiation. This is one of three isoenzymes responsible for cellular hyaluronan synthesis. The sequence is that of Hyaluronan synthase 3 (has3) from Xenopus laevis (African clawed frog).